Reading from the N-terminus, the 194-residue chain is Fe/S biogenesis protein NfuA (194 aa).

[4Fe-4S] cluster is bound by residues Cys-152 and Cys-155.

It belongs to the NfuA family. In terms of assembly, homodimer. [4Fe-4S] cluster serves as cofactor.

In terms of biological role, involved in iron-sulfur cluster biogenesis. Binds a 4Fe-4S cluster, can transfer this cluster to apoproteins, and thereby intervenes in the maturation of Fe/S proteins. Could also act as a scaffold/chaperone for damaged Fe/S proteins. The protein is Fe/S biogenesis protein NfuA of Pseudomonas putida (strain GB-1).